Here is a 442-residue protein sequence, read N- to C-terminus: MASSFCPKQALSFTNSTHQLHQSRAIPRDIHVRFPAPVSSPSSRCGLKSKATTRLKVLATSATKVMDHSSSKASSQAPTVVEVDLGTRSYPIYIGAGLLDQPDLLQRHIHGKRVLVVTNTTVAPLYLDKTISALTDGNPNVTVESVILPDGEQFKNMETLMKVFDKAIESRLDRRCTFVALGGGVIGDMCGYAAASYLRGVNFIQIPTTVMAQVDSSVGGKTGINHPLGKNMIGAFYQPQCVLIDTDTLNTLPDRELASGLAEVIKYGLIRDAEFFEWQEQNMPLLLARDPTAFTYAIKRSCENKADVVSQDEKESGVRATLNLGHTFGHAVETGVGYGQWLHGEAVAAGTVMAVDMSRRLGWIDDSLVQRVQKILQQAKLPTSPPETMTVEMFKSIMAVDKKVADGKLRLILLKGSLGNCVFTGDYDQKALDETLRAFSKS.

The N-terminal 61 residues, 1–61 (MASSFCPKQA…TTRLKVLATS (61 aa)), are a transit peptide targeting the chloroplast. Residues N119, 150 to 152 (DGE), K155, 183 to 188 (GGVIGD), 208 to 209 (TT), K221, K230, and 248 to 251 (TLNT) each bind NAD(+). Residue E263 coordinates a divalent metal cation. Position 305 (K305) interacts with NAD(+). Residues H326 and H343 each contribute to the a divalent metal cation site.

Belongs to the sugar phosphate cyclases superfamily. Dehydroquinate synthase family. In terms of assembly, homodimer. It depends on a divalent metal cation as a cofactor. The cofactor is NAD(+). As to expression, highly expressed in roots. Lower expression in stems, flowers and cotyledons. Barely detected in leaves.

The protein localises to the plastid. The protein resides in the chloroplast. The catalysed reaction is 7-phospho-2-dehydro-3-deoxy-D-arabino-heptonate = 3-dehydroquinate + phosphate. It functions in the pathway metabolic intermediate biosynthesis; chorismate biosynthesis; chorismate from D-erythrose 4-phosphate and phosphoenolpyruvate: step 2/7. Functionally, catalyzes the second step in the shikimate pathway. The chain is 3-dehydroquinate synthase, chloroplastic (DHQS) from Solanum lycopersicum (Tomato).